Reading from the N-terminus, the 136-residue chain is Preprocaerulein type I' (136 aa).

Positions 1-26 (MFKGILLCVLFAVLSANPLSQPEGFA) are cleaved as a signal peptide. Residues 27–136 (DEERDVRGLA…NALGGAPQQR (110 aa)) constitute a propeptide that is removed on maturation. Residues 82-101 (GAPQQREANDERRFADDEDD) are disordered.

It belongs to the gastrin/cholecystokinin family. As to expression, expressed by the skin glands.

It is found in the secreted. The pharmacological activities of caerulein are quite similar to the physiological activities of gastrin and related peptides. In Xenopus laevis (African clawed frog), this protein is Preprocaerulein type I'.